The primary structure comprises 631 residues: Mercuric reductase (631 aa).

2 HMA domains span residues 2 to 66 (KKYR…YHPG) and 81 to 145 (KKYR…YQPG). A metal cation contacts are provided by Cys-13, Cys-16, Cys-92, and Cys-95. FAD is bound by residues Ala-181, Gly-201, and Thr-206. Residues Cys-207 and Cys-212 are joined by a disulfide bond. 3 residues coordinate FAD: Lys-216, Asp-472, and Val-480. Hg(2+) is bound by residues Cys-628 and Cys-629.

The protein belongs to the class-I pyridine nucleotide-disulfide oxidoreductase family. Homodimer. Requires FAD as cofactor.

It catalyses the reaction Hg + NADP(+) + H(+) = Hg(2+) + NADPH. Functionally, resistance to Hg(2+) in bacteria appears to be governed by a specialized system which includes mercuric reductase. MerA protein is responsible for volatilizing mercury as Hg(0). This Bacillus cereus protein is Mercuric reductase (merA).